Consider the following 200-residue polypeptide: Urease accessory protein UreG (200 aa).

Position 11–18 (11–18) interacts with GTP; that stretch reads GPVGSGKT.

It belongs to the SIMIBI class G3E GTPase family. UreG subfamily. In terms of assembly, homodimer. UreD, UreF and UreG form a complex that acts as a GTP-hydrolysis-dependent molecular chaperone, activating the urease apoprotein by helping to assemble the nickel containing metallocenter of UreC. The UreE protein probably delivers the nickel.

It localises to the cytoplasm. In terms of biological role, facilitates the functional incorporation of the urease nickel metallocenter. This process requires GTP hydrolysis, probably effectuated by UreG. This is Urease accessory protein UreG from Thermosynechococcus vestitus (strain NIES-2133 / IAM M-273 / BP-1).